The primary structure comprises 469 residues: 3-isopropylmalate dehydratase large subunit (469 aa).

Positions 347, 410, and 413 each coordinate [4Fe-4S] cluster.

Belongs to the aconitase/IPM isomerase family. LeuC type 1 subfamily. In terms of assembly, heterodimer of LeuC and LeuD. [4Fe-4S] cluster is required as a cofactor.

It catalyses the reaction (2R,3S)-3-isopropylmalate = (2S)-2-isopropylmalate. It participates in amino-acid biosynthesis; L-leucine biosynthesis; L-leucine from 3-methyl-2-oxobutanoate: step 2/4. Catalyzes the isomerization between 2-isopropylmalate and 3-isopropylmalate, via the formation of 2-isopropylmaleate. The sequence is that of 3-isopropylmalate dehydratase large subunit from Burkholderia orbicola (strain MC0-3).